Reading from the N-terminus, the 210-residue chain is MIKQPALAQEQYACVYAWLALLFFREVDDEGLMQLQSAEIADWLALLKRQPALTASVAQLEQKIAALRQRQDAQLELAADFCGLFLMTDKKSALPYASQYLQKEPGMIKHLLLEAGMDVNDGFKEPTDHLAIYLELLSHLHFSLGESFQQRRMNKLRQKTLSSLLEWLPEFTNNCVKHDPYGFYAALSQLLLAIVRFDDGEEDFPIVAAG.

The protein belongs to the TorD/DmsD family. TorD subfamily.

The protein resides in the cytoplasm. In terms of biological role, involved in the biogenesis of TorA. Acts on TorA before the insertion of the molybdenum cofactor and, as a result, probably favors a conformation of the apoenzyme that is competent for acquiring the cofactor. In Salmonella arizonae (strain ATCC BAA-731 / CDC346-86 / RSK2980), this protein is Chaperone protein TorD.